We begin with the raw amino-acid sequence, 269 residues long: Hydroxyethylthiazole kinase (269 aa).

M48 provides a ligand contact to substrate. Residues K124 and T170 each contribute to the ATP site. G197 is a binding site for substrate.

The protein belongs to the Thz kinase family. The cofactor is Mg(2+).

It carries out the reaction 5-(2-hydroxyethyl)-4-methylthiazole + ATP = 4-methyl-5-(2-phosphooxyethyl)-thiazole + ADP + H(+). The protein operates within cofactor biosynthesis; thiamine diphosphate biosynthesis; 4-methyl-5-(2-phosphoethyl)-thiazole from 5-(2-hydroxyethyl)-4-methylthiazole: step 1/1. Catalyzes the phosphorylation of the hydroxyl group of 4-methyl-5-beta-hydroxyethylthiazole (THZ). In Clostridium kluyveri (strain NBRC 12016), this protein is Hydroxyethylthiazole kinase.